A 77-amino-acid polypeptide reads, in one-letter code: Translation initiation factor IF-1, chloroplastic (77 aa).

The region spanning 1–71 (MKEQKWIHEG…SRGRIIYRLR (71 aa)) is the S1-like domain.

The protein belongs to the IF-1 family. As to quaternary structure, component of the 30S ribosomal translation pre-initiation complex which assembles on the 30S ribosome in the order IF-2 and IF-3, IF-1 and N-formylmethionyl-tRNA(fMet); mRNA recruitment can occur at any time during PIC assembly.

It localises to the plastid. It is found in the chloroplast. Functionally, one of the essential components for the initiation of protein synthesis. Stabilizes the binding of IF-2 and IF-3 on the 30S subunit to which N-formylmethionyl-tRNA(fMet) subsequently binds. Helps modulate mRNA selection, yielding the 30S pre-initiation complex (PIC). Upon addition of the 50S ribosomal subunit IF-1, IF-2 and IF-3 are released leaving the mature 70S translation initiation complex. This Buxus microphylla (Littleleaf boxwood) protein is Translation initiation factor IF-1, chloroplastic.